A 456-amino-acid chain; its full sequence is Bifunctional protein GlmU (456 aa).

The segment at Met1–Arg229 is pyrophosphorylase. UDP-N-acetyl-alpha-D-glucosamine contacts are provided by residues Leu11–Gly14, Lys25, Gln76, Gly81–Thr82, Tyr103–Asp105, Gly140, Glu154, Asn169, and Asn227. Residue Asp105 coordinates Mg(2+). Asn227 serves as a coordination point for Mg(2+). Residues Leu230–Ala250 are linker. Residues Gly251–Lys456 are N-acetyltransferase. Residues Arg333 and Lys351 each contribute to the UDP-N-acetyl-alpha-D-glucosamine site. His363 acts as the Proton acceptor in catalysis. 2 residues coordinate UDP-N-acetyl-alpha-D-glucosamine: Tyr366 and Asn377. Residues Ala380, Asn386 to Tyr387, Ser405, Ala423, and Arg440 each bind acetyl-CoA.

This sequence in the N-terminal section; belongs to the N-acetylglucosamine-1-phosphate uridyltransferase family. The protein in the C-terminal section; belongs to the transferase hexapeptide repeat family. Homotrimer. Mg(2+) serves as cofactor.

It localises to the cytoplasm. It carries out the reaction alpha-D-glucosamine 1-phosphate + acetyl-CoA = N-acetyl-alpha-D-glucosamine 1-phosphate + CoA + H(+). The catalysed reaction is N-acetyl-alpha-D-glucosamine 1-phosphate + UTP + H(+) = UDP-N-acetyl-alpha-D-glucosamine + diphosphate. Its pathway is nucleotide-sugar biosynthesis; UDP-N-acetyl-alpha-D-glucosamine biosynthesis; N-acetyl-alpha-D-glucosamine 1-phosphate from alpha-D-glucosamine 6-phosphate (route II): step 2/2. It participates in nucleotide-sugar biosynthesis; UDP-N-acetyl-alpha-D-glucosamine biosynthesis; UDP-N-acetyl-alpha-D-glucosamine from N-acetyl-alpha-D-glucosamine 1-phosphate: step 1/1. It functions in the pathway bacterial outer membrane biogenesis; LPS lipid A biosynthesis. Its function is as follows. Catalyzes the last two sequential reactions in the de novo biosynthetic pathway for UDP-N-acetylglucosamine (UDP-GlcNAc). The C-terminal domain catalyzes the transfer of acetyl group from acetyl coenzyme A to glucosamine-1-phosphate (GlcN-1-P) to produce N-acetylglucosamine-1-phosphate (GlcNAc-1-P), which is converted into UDP-GlcNAc by the transfer of uridine 5-monophosphate (from uridine 5-triphosphate), a reaction catalyzed by the N-terminal domain. In Shigella boydii serotype 4 (strain Sb227), this protein is Bifunctional protein GlmU.